The following is a 388-amino-acid chain: Na(+)/H(+) antiporter NhaA (388 aa).

11 helical membrane-spanning segments follow: residues 14 to 34 (GGII…MGAT), 59 to 79 (MLLW…GLEV), 95 to 115 (AFPV…YLAF), 125 to 145 (GWAI…ALLG), 154 to 174 (IFLM…IALF), 179 to 199 (LSIV…LLNL), 219 to 239 (VLKS…FIPL), 254 to 274 (VLHP…NAGV), 292 to 312 (IIAG…WLAL), 328 to 348 (IMAV…IASL), and 360 to 380 (WAKL…YSWL).

Belongs to the NhaA Na(+)/H(+) (TC 2.A.33) antiporter family.

It localises to the cell inner membrane. The enzyme catalyses Na(+)(in) + 2 H(+)(out) = Na(+)(out) + 2 H(+)(in). In terms of biological role, na(+)/H(+) antiporter that extrudes sodium in exchange for external protons. The protein is Na(+)/H(+) antiporter NhaA of Salmonella choleraesuis (strain SC-B67).